A 451-amino-acid polypeptide reads, in one-letter code: Phosphoglucosamine mutase (451 aa).

Ser-103 serves as the catalytic Phosphoserine intermediate. Residues Ser-103, Asp-243, Asp-245, and Asp-247 each coordinate Mg(2+). A Phosphoserine modification is found at Ser-103.

This sequence belongs to the phosphohexose mutase family. Mg(2+) is required as a cofactor. Activated by phosphorylation.

It catalyses the reaction alpha-D-glucosamine 1-phosphate = D-glucosamine 6-phosphate. In terms of biological role, catalyzes the conversion of glucosamine-6-phosphate to glucosamine-1-phosphate. The chain is Phosphoglucosamine mutase from Limosilactobacillus reuteri subsp. reuteri (strain JCM 1112) (Lactobacillus reuteri).